Reading from the N-terminus, the 143-residue chain is Nucleoside diphosphate kinase (143 aa).

ATP-binding residues include lysine 11, phenylalanine 59, arginine 87, threonine 93, arginine 104, and asparagine 114. Catalysis depends on histidine 117, which acts as the Pros-phosphohistidine intermediate.

This sequence belongs to the NDK family. Homotetramer. The cofactor is Mg(2+).

It localises to the cytoplasm. It catalyses the reaction a 2'-deoxyribonucleoside 5'-diphosphate + ATP = a 2'-deoxyribonucleoside 5'-triphosphate + ADP. The enzyme catalyses a ribonucleoside 5'-diphosphate + ATP = a ribonucleoside 5'-triphosphate + ADP. Major role in the synthesis of nucleoside triphosphates other than ATP. The ATP gamma phosphate is transferred to the NDP beta phosphate via a ping-pong mechanism, using a phosphorylated active-site intermediate. The sequence is that of Nucleoside diphosphate kinase from Shewanella sediminis (strain HAW-EB3).